The sequence spans 1169 residues: RecBCD enzyme subunit RecB (1169 aa).

The UvrD-like helicase ATP-binding domain occupies 1–436 (MNKILEKIQN…IVLKINHRSS (436 aa)). A DNA-binding and helicase activity, interacts with RecC region spans residues 1-839 (MNKILEKIQN…LLEIAKIFTI (839 aa)). Position 18–25 (18–25 (ASAGTGKT)) interacts with ATP. The region spanning 459-746 (IEKIDFTNSL…ELMTIHKSKG (288 aa)) is the UvrD-like helicase C-terminal domain. Positions 883 to 1169 (KEYTSSFSSL…ILELGIKRHL (287 aa)) are nuclease activity, interacts with RecD and RecA. Mg(2+)-binding residues include His-939, Asp-1052, and Asp-1065. The active-site For nuclease activity is Asp-1065.

The protein belongs to the helicase family. UvrD subfamily. In terms of assembly, heterotrimer of RecB, RecC and RecD. All subunits contribute to DNA-binding. Interacts with RecA. It depends on Mg(2+) as a cofactor.

The enzyme catalyses Exonucleolytic cleavage (in the presence of ATP) in either 5'- to 3'- or 3'- to 5'-direction to yield 5'-phosphooligonucleotides.. It carries out the reaction Couples ATP hydrolysis with the unwinding of duplex DNA by translocating in the 3'-5' direction.. It catalyses the reaction ATP + H2O = ADP + phosphate + H(+). In terms of biological role, a helicase/nuclease that prepares dsDNA breaks (DSB) for recombinational DNA repair. Binds to DSBs and unwinds DNA via a highly rapid and processive ATP-dependent bidirectional helicase activity. Unwinds dsDNA until it encounters a Chi (crossover hotspot instigator) sequence from the 3' direction. Cuts ssDNA a few nucleotides 3' to the Chi site. The properties and activities of the enzyme are changed at Chi. The Chi-altered holoenzyme produces a long 3'-ssDNA overhang and facilitates RecA-binding to the ssDNA for homologous DNA recombination and repair. Holoenzyme degrades any linearized DNA that is unable to undergo homologous recombination. In the holoenzyme this subunit contributes ATPase, 3'-5' helicase, exonuclease activity and loads RecA onto ssDNA. This Borreliella burgdorferi (strain ATCC 35210 / DSM 4680 / CIP 102532 / B31) (Borrelia burgdorferi) protein is RecBCD enzyme subunit RecB.